Here is a 58-residue protein sequence, read N- to C-terminus: Sperm protamine P1 (58 aa).

The interval 1–58 (MARYRRRSRSRSRSRYGRRRRRSRSRRRRSRRRRRRRGRRGRGYHRRSPHRRRRRRRR) is disordered.

It belongs to the protamine P1 family. In terms of tissue distribution, testis.

Its subcellular location is the nucleus. It localises to the chromosome. Its function is as follows. Protamines substitute for histones in the chromatin of sperm during the haploid phase of spermatogenesis. They compact sperm DNA into a highly condensed, stable and inactive complex. This Monodelphis domestica (Gray short-tailed opossum) protein is Sperm protamine P1 (PRM1).